The chain runs to 88 residues: Small ribosomal subunit protein uS17 (88 aa).

It belongs to the universal ribosomal protein uS17 family. As to quaternary structure, part of the 30S ribosomal subunit.

In terms of biological role, one of the primary rRNA binding proteins, it binds specifically to the 5'-end of 16S ribosomal RNA. The polypeptide is Small ribosomal subunit protein uS17 (Syntrophotalea carbinolica (strain DSM 2380 / NBRC 103641 / GraBd1) (Pelobacter carbinolicus)).